The chain runs to 21 residues: Ocellatin-3 (21 aa).

I21 is modified (isoleucine amide).

Expressed by the skin dorsal glands.

Its subcellular location is the secreted. Its function is as follows. Has hemolytic activity against human erythrocytes and antibacterial activity against the Gram-negative bacterium E.coli. The chain is Ocellatin-3 from Leptodactylus ocellatus (Argus frog).